A 486-amino-acid polypeptide reads, in one-letter code: O-methyltransferase gedA (486 aa).

S-adenosyl-L-methionine-binding positions include 298–299, D321, 353–354, and R369; these read GG and SF. Residue H373 is the Proton acceptor of the active site.

This sequence belongs to the class I-like SAM-binding methyltransferase superfamily. Cation-independent O-methyltransferase family.

It carries out the reaction emodin + S-adenosyl-L-methionine = questin + S-adenosyl-L-homocysteine + H(+). It functions in the pathway secondary metabolite biosynthesis. In terms of biological role, O-methyltransferase; part of the gene cluster that mediates the biosynthesis of geodin, an intermediate in the biosynthesis of other natural products. The pathway begins with the synthesis of atrochrysone thioester by the polyketide synthase (PKS) gedC. The atrochrysone carboxyl ACP thioesterase gedB then breaks the thioester bond and releases the atrochrysone carboxylic acid from gedC. The atrochrysone carboxylic acid is then converted to atrochrysone which is further transformed into emodinanthrone. The next step is performed by the emodinanthrone oxygenase gedH that catalyzes the oxidation of emodinanthrone to emodin. Emodin O-methyltransferase encoded probably by gedA then catalyzes methylation of the 8-hydroxy group of emodin to form questin. Ring cleavage of questin by questin oxidase gedK leads to desmethylsulochrin via several intermediates including questin epoxide. Another methylation step probably catalyzed by methyltransferase gedG leads to the formation of sulochrin which is further converted to dihydrogeodin by the sulochrin halogenase gedL. Finally, the dihydrogeodin oxidase gedJ catalyzes the stereospecific phenol oxidative coupling reaction converting dihydrogeodin to geodin. This chain is O-methyltransferase gedA, found in Aspergillus terreus (strain NIH 2624 / FGSC A1156).